The chain runs to 268 residues: Shikimate dehydrogenase (NADP(+)) (268 aa).

Shikimate is bound by residues 13–15 and Thr-60; that span reads SLS. The active-site Proton acceptor is Lys-64. Glu-76 contributes to the NADP(+) binding site. Residues Asn-85 and Asp-100 each contribute to the shikimate site. Residues 124–128, 148–153, and Ile-209 contribute to the NADP(+) site; these read GAGGA and NRTMAR. Tyr-211 provides a ligand contact to shikimate. Gly-232 is a binding site for NADP(+).

This sequence belongs to the shikimate dehydrogenase family. In terms of assembly, homodimer.

It catalyses the reaction shikimate + NADP(+) = 3-dehydroshikimate + NADPH + H(+). The protein operates within metabolic intermediate biosynthesis; chorismate biosynthesis; chorismate from D-erythrose 4-phosphate and phosphoenolpyruvate: step 4/7. Involved in the biosynthesis of the chorismate, which leads to the biosynthesis of aromatic amino acids. Catalyzes the reversible NADPH linked reduction of 3-dehydroshikimate (DHSA) to yield shikimate (SA). The sequence is that of Shikimate dehydrogenase (NADP(+)) from Staphylococcus aureus (strain MRSA252).